The chain runs to 287 residues: Protoheme IX farnesyltransferase (287 aa).

The next 8 helical transmembrane spans lie at Ile-9–Leu-29, Leu-31–Ala-51, Ile-94–Ile-114, Val-132–Leu-152, Trp-158–Leu-178, Ala-202–Phe-222, Val-228–Leu-248, and Leu-267–Leu-287.

Belongs to the UbiA prenyltransferase family. Protoheme IX farnesyltransferase subfamily.

Its subcellular location is the cell inner membrane. It catalyses the reaction heme b + (2E,6E)-farnesyl diphosphate + H2O = Fe(II)-heme o + diphosphate. It functions in the pathway porphyrin-containing compound metabolism; heme O biosynthesis; heme O from protoheme: step 1/1. In terms of biological role, converts heme B (protoheme IX) to heme O by substitution of the vinyl group on carbon 2 of heme B porphyrin ring with a hydroxyethyl farnesyl side group. The polypeptide is Protoheme IX farnesyltransferase (Rhodopirellula baltica (strain DSM 10527 / NCIMB 13988 / SH1)).